The chain runs to 158 residues: Hypoxanthine DNA glycosylase (158 aa).

Residue asparagine 39 is part of the active site.

The protein belongs to the uracil-DNA glycosylase (UDG) superfamily. Type 6 (HDG) family.

Functionally, excises hypoxanthine, a deamination product of adenine, from double-stranded DNA. Acts on double-stranded DNA containing G/I, T/I, A/I and C/I base pairs, but not on single-stranded inosine-containing DNA. Also has minor xanthine DNA glycosylase activity. Lacks any detectable uracil-DNA glycosylase activity. The sequence is that of Hypoxanthine DNA glycosylase from Methanosarcina barkeri (strain Fusaro / DSM 804).